The chain runs to 71 residues: SRY-related protein LG28 (71 aa).

The segment at residues 1-68 is a DNA-binding region (HMG box); it reads VKRPMNAFMV…KHMADYPDYK (68 aa).

It localises to the nucleus. This Eublepharis macularius (Leopard gecko) protein is SRY-related protein LG28.